Reading from the N-terminus, the 96-residue chain is Protein RnfH (96 aa).

It belongs to the UPF0125 (RnfH) family.

This Escherichia coli O81 (strain ED1a) protein is Protein RnfH.